A 585-amino-acid chain; its full sequence is Arginine--tRNA ligase (585 aa).

The 'HIGH' region signature appears at 131–141 (ANPTGPMHVGH).

This sequence belongs to the class-I aminoacyl-tRNA synthetase family. As to quaternary structure, monomer.

It is found in the cytoplasm. The enzyme catalyses tRNA(Arg) + L-arginine + ATP = L-arginyl-tRNA(Arg) + AMP + diphosphate. The sequence is that of Arginine--tRNA ligase from Brucella anthropi (strain ATCC 49188 / DSM 6882 / CCUG 24695 / JCM 21032 / LMG 3331 / NBRC 15819 / NCTC 12168 / Alc 37) (Ochrobactrum anthropi).